Reading from the N-terminus, the 300-residue chain is tRNA pseudouridine synthase B (300 aa).

Asp-38 serves as the catalytic Nucleophile.

This sequence belongs to the pseudouridine synthase TruB family. Type 1 subfamily.

The enzyme catalyses uridine(55) in tRNA = pseudouridine(55) in tRNA. Responsible for synthesis of pseudouridine from uracil-55 in the psi GC loop of transfer RNAs. This chain is tRNA pseudouridine synthase B, found in Dehalococcoides mccartyi (strain ATCC BAA-2266 / KCTC 15142 / 195) (Dehalococcoides ethenogenes (strain 195)).